The chain runs to 374 residues: MSKGIVLLAAGGTGGHVFPAEALAFKLKERGYSVHLVTDSRAERYAGKFPAEEIHVVPSATIGSKNPVAVARSLWTLWSGMRAAKKLIQRLQPVIVVGFGGYPTVPPLLAATRLGVPSMIHEQNAVMGRANKALATRVQAIAGGFLPEGGAAFPDKTVTTGNPVRPAIIAAAEVPYTPSHPGEAFNLVVFGGSQGAQYFSKALPTAISLLDDALRVRLRITQQVRPEDMEMVSGCVARLEMGADIAPFFTDMAERLARAHLVICRSGASTVSEISVIGRPAVLVPYPHALDHDQAANAAALAATGGAKVIAQSELSPEKIAAILTAVMNDPEKLSHMAAAAKLAGKPDAANLLADMVEAIAARRTIAEFKRTRA.

UDP-N-acetyl-alpha-D-glucosamine is bound by residues 13-15 (TGG), N124, R165, S193, and Q294.

The protein belongs to the glycosyltransferase 28 family. MurG subfamily.

The protein localises to the cell inner membrane. The enzyme catalyses di-trans,octa-cis-undecaprenyl diphospho-N-acetyl-alpha-D-muramoyl-L-alanyl-D-glutamyl-meso-2,6-diaminopimeloyl-D-alanyl-D-alanine + UDP-N-acetyl-alpha-D-glucosamine = di-trans,octa-cis-undecaprenyl diphospho-[N-acetyl-alpha-D-glucosaminyl-(1-&gt;4)]-N-acetyl-alpha-D-muramoyl-L-alanyl-D-glutamyl-meso-2,6-diaminopimeloyl-D-alanyl-D-alanine + UDP + H(+). The protein operates within cell wall biogenesis; peptidoglycan biosynthesis. Cell wall formation. Catalyzes the transfer of a GlcNAc subunit on undecaprenyl-pyrophosphoryl-MurNAc-pentapeptide (lipid intermediate I) to form undecaprenyl-pyrophosphoryl-MurNAc-(pentapeptide)GlcNAc (lipid intermediate II). In Rhizobium johnstonii (strain DSM 114642 / LMG 32736 / 3841) (Rhizobium leguminosarum bv. viciae), this protein is UDP-N-acetylglucosamine--N-acetylmuramyl-(pentapeptide) pyrophosphoryl-undecaprenol N-acetylglucosamine transferase.